Reading from the N-terminus, the 1257-residue chain is Neural cell adhesion molecule L1 (1257 aa).

The signal sequence occupies residues 1-19 (MVVALRYVWPLLLCSPCLL). At 20 to 1120 (IQIPEEYEGH…RLPPAGFATE (1101 aa)) the chain is on the extracellular side. Ig-like C2-type domains follow at residues 35–125 (PVIT…TAMS), 139–226 (PKET…EPID), 240–328 (PRLL…YYVT), 333–420 (PYWL…AYIY), 425–507 (PAKI…NNVT), and 518–607 (TQIT…AQLL). Intrachain disulfides connect cysteine 57/cysteine 114 and cysteine 158/cysteine 209. Asparagine 100, asparagine 203, asparagine 247, and asparagine 294 each carry an N-linked (GlcNAc...) asparagine glycan. Disulfide bonds link cysteine 264–cysteine 312 and cysteine 354–cysteine 404. N-linked (GlcNAc...) asparagine glycosylation is found at asparagine 433, asparagine 479, asparagine 490, and asparagine 505. Cysteine 448 and cysteine 497 are oxidised to a cystine. Residues cysteine 539 and cysteine 591 are joined by a disulfide bond. The Cell attachment site motif lies at 554 to 556 (RGD). N-linked (GlcNAc...) asparagine glycosylation is found at asparagine 588 and asparagine 671. 5 consecutive Fibronectin type-III domains span residues 615-712 (VPRL…TPEA), 717-810 (NPVD…SGED), 814-916 (AIPE…TPEG), 920-1015 (HPEA…MALS), and 1016-1115 (GISD…LPPA). Positions 698–725 (GEPSPVSETVVTPEAAPEKNPVDVKGEG) are disordered. Residues 713 to 725 (APEKNPVDVKGEG) show a composition bias toward basic and acidic residues. Asparagine 726, asparagine 777, asparagine 825, asparagine 849, asparagine 876, asparagine 979, asparagine 1022, asparagine 1030, asparagine 1071, and asparagine 1105 each carry an N-linked (GlcNAc...) asparagine glycan. Residues 1121 to 1143 (GWFIGFVSAIILLLLVLLILCFI) traverse the membrane as a helical segment. Topologically, residues 1144 to 1257 (KRSKGGKYSV…SPINPAVALE (114 aa)) are cytoplasmic. Serine 1163, threonine 1172, arginine 1177, and serine 1178 each carry phosphoserine. Residues 1176–1187 (YRSLESDNEEKA) are compositionally biased toward basic and acidic residues. 2 disordered regions span residues 1176-1207 (YRSLESDNEEKAFGSSQPSLNGDIKPLGSDDS) and 1226-1257 (IGQYSGKKEKEAAGGNDSSGATSPINPAVALE). Position 1181 is a phosphoserine; by CaMK2 (serine 1181). Residues serine 1194, serine 1243, serine 1244, and serine 1248 each carry the phosphoserine modification. The span at 1241–1250 (NDSSGATSPI) shows a compositional bias: polar residues.

The protein belongs to the immunoglobulin superfamily. L1/neurofascin/NgCAM family. Interacts with SHTN1; the interaction occurs in axonal growth cones. Interacts with isoform 2 of BSG.

It is found in the cell membrane. Its subcellular location is the cell projection. It localises to the growth cone. The protein resides in the axon. The protein localises to the dendrite. Its function is as follows. Neural cell adhesion molecule involved in the dynamics of cell adhesion and in the generation of transmembrane signals at tyrosine kinase receptors. During brain development, critical in multiple processes, including neuronal migration, axonal growth and fasciculation, and synaptogenesis. In the mature brain, plays a role in the dynamics of neuronal structure and function, including synaptic plasticity. The sequence is that of Neural cell adhesion molecule L1 (L1CAM) from Homo sapiens (Human).